Reading from the N-terminus, the 247-residue chain is HTH-type transcriptional regulator SarU (247 aa).

2 DNA-binding regions (H-T-H motif) span residues Leu-53–Lys-76 and Leu-178–Asn-201.

It belongs to the SarA family.

The protein localises to the cytoplasm. Its function is as follows. Positive regulator of RNAII and RNAIII in a cell density-dependent manner. It can contribute to the expression of virulence genes controlled by agr. May also regulate target genes via an agr-independent pathway. The sequence is that of HTH-type transcriptional regulator SarU (sarU) from Staphylococcus aureus (strain NCTC 8325 / PS 47).